The primary structure comprises 205 residues: Holliday junction resolvase RecU (205 aa).

A disordered region spans residues 1–26 (MIRYPNGKSYQPIQPIGTKKRISGES). Residues T86, D88, E101, and Q120 each contribute to the Mg(2+) site.

It belongs to the RecU family. Requires Mg(2+) as cofactor.

It is found in the cytoplasm. The enzyme catalyses Endonucleolytic cleavage at a junction such as a reciprocal single-stranded crossover between two homologous DNA duplexes (Holliday junction).. Functionally, endonuclease that resolves Holliday junction intermediates in genetic recombination. Cleaves mobile four-strand junctions by introducing symmetrical nicks in paired strands. Promotes annealing of linear ssDNA with homologous dsDNA. Required for DNA repair, homologous recombination and chromosome segregation. This chain is Holliday junction resolvase RecU, found in Bacillus pumilus (strain SAFR-032).